Here is a 274-residue protein sequence, read N- to C-terminus: uncharacterized protein (274 aa).

Transmembrane regions (helical) follow at residues 9 to 29, 64 to 84, 135 to 155, 165 to 185, and 219 to 239; these read SLLL…VSIL, WFWH…FFIL, LAGH…ALLL, MSSM…WQNA, and IIVY…LVLG.

The protein belongs to the steroid 5-alpha reductase family.

It is found in the endoplasmic reticulum membrane. This is an uncharacterized protein from Schizosaccharomyces pombe (strain 972 / ATCC 24843) (Fission yeast).